We begin with the raw amino-acid sequence, 446 residues long: Exodeoxyribonuclease 7 large subunit (446 aa).

This sequence belongs to the XseA family. In terms of assembly, heterooligomer composed of large and small subunits.

The protein resides in the cytoplasm. The catalysed reaction is Exonucleolytic cleavage in either 5'- to 3'- or 3'- to 5'-direction to yield nucleoside 5'-phosphates.. Its function is as follows. Bidirectionally degrades single-stranded DNA into large acid-insoluble oligonucleotides, which are then degraded further into small acid-soluble oligonucleotides. The protein is Exodeoxyribonuclease 7 large subunit of Xanthomonas campestris pv. campestris (strain 8004).